The following is a 165-amino-acid chain: Glutamyl-tRNA(Gln) amidotransferase subunit F, mitochondrial (165 aa).

The transit peptide at 1-19 (MKSILRSTTRNLITSSRRF) directs the protein to the mitochondrion.

The protein belongs to the GatF family. As to quaternary structure, subunit of the heterotrimeric GatFAB amidotransferase (AdT) complex, composed of A, B and F subunits.

Its subcellular location is the mitochondrion inner membrane. The catalysed reaction is L-glutamyl-tRNA(Gln) + L-glutamine + ATP + H2O = L-glutaminyl-tRNA(Gln) + L-glutamate + ADP + phosphate + H(+). In terms of biological role, allows the formation of correctly charged Gln-tRNA(Gln) through the transamidation of misacylated Glu-tRNA(Gln) in the mitochondria. The reaction takes place in the presence of glutamine and ATP through an activated gamma-phospho-Glu-tRNA(Gln). Required for proper protein synthesis within the mitochondrion. This is Glutamyl-tRNA(Gln) amidotransferase subunit F, mitochondrial from Candida albicans (strain WO-1) (Yeast).